Here is a 341-residue protein sequence, read N- to C-terminus: Fructose-1,6-bisphosphatase, cytosolic (341 aa).

Mg(2+) contacts are provided by E71, E100, D121, L123, and D124. Residues 124 to 127 (DGSS), N215, Y247, Y267, and K277 contribute to the substrate site. E283 is a Mg(2+) binding site.

This sequence belongs to the FBPase class 1 family. Requires Mg(2+) as cofactor.

It localises to the cytoplasm. It catalyses the reaction beta-D-fructose 1,6-bisphosphate + H2O = beta-D-fructose 6-phosphate + phosphate. This Spinacia oleracea (Spinach) protein is Fructose-1,6-bisphosphatase, cytosolic.